The primary structure comprises 270 residues: Putative phosphoenolpyruvate synthase regulatory protein (270 aa).

149–156 (GVSRSGKT) contacts ADP.

This sequence belongs to the pyruvate, phosphate/water dikinase regulatory protein family. PSRP subfamily.

It catalyses the reaction [pyruvate, water dikinase] + ADP = [pyruvate, water dikinase]-phosphate + AMP + H(+). The catalysed reaction is [pyruvate, water dikinase]-phosphate + phosphate + H(+) = [pyruvate, water dikinase] + diphosphate. In terms of biological role, bifunctional serine/threonine kinase and phosphorylase involved in the regulation of the phosphoenolpyruvate synthase (PEPS) by catalyzing its phosphorylation/dephosphorylation. The protein is Putative phosphoenolpyruvate synthase regulatory protein of Pseudoalteromonas atlantica (strain T6c / ATCC BAA-1087).